We begin with the raw amino-acid sequence, 129 residues long: Large ribosomal subunit protein bL20 (129 aa).

The protein belongs to the bacterial ribosomal protein bL20 family.

Its function is as follows. Binds directly to 23S ribosomal RNA and is necessary for the in vitro assembly process of the 50S ribosomal subunit. It is not involved in the protein synthesizing functions of that subunit. In Mycobacteroides abscessus (strain ATCC 19977 / DSM 44196 / CCUG 20993 / CIP 104536 / JCM 13569 / NCTC 13031 / TMC 1543 / L948) (Mycobacterium abscessus), this protein is Large ribosomal subunit protein bL20.